Here is a 419-residue protein sequence, read N- to C-terminus: Probable sodium/metabolite cotransporter BASS2, chloroplastic (419 aa).

The N-terminal 45 residues, 1 to 45, are a transit peptide targeting the chloroplast; that stretch reads MAASTTCPARSMASVSRALRPRPHAAIASAAVRTAARLGGGLGIV. 9 helical membrane-spanning segments follow: residues 106-126, 137-157, 170-190, 194-214, 225-245, 259-279, 291-311, 323-343, and 384-404; these read IVELLTTLFPVWVILGTIIGI, TDLFTVGLGFLMLSMGLTLTF, VGVGFLAQYLIKPMLGFAIAM, LSAPLATGLILVSCCPGGQAS, VALSVLMTTCSTIGAIVMTPL, AAGLAISTFQVVLLPTIVGVL, IISITPLIGVLLTTLLCASPI, GQLIIPVALLHVAAFALGYWL, and VPSAVSVVCMALGGSALAVFW.

Belongs to the bile acid:sodium symporter (BASS) (TC 2.A.28) family.

It localises to the membrane. The protein resides in the plastid. It is found in the chloroplast envelope. May function as sodium-coupled metabolite transporter across the chloroplast envelope. This is Probable sodium/metabolite cotransporter BASS2, chloroplastic (BASS2) from Oryza sativa subsp. japonica (Rice).